An 856-amino-acid polypeptide reads, in one-letter code: Leucine--tRNA ligase (856 aa).

The 'HIGH' region motif lies at 53–63; sequence PYPSGNLHMGH. A 'KMSKS' region motif is present at residues 622-626; the sequence is KMSKS. Residue lysine 625 participates in ATP binding.

It belongs to the class-I aminoacyl-tRNA synthetase family.

It is found in the cytoplasm. The enzyme catalyses tRNA(Leu) + L-leucine + ATP = L-leucyl-tRNA(Leu) + AMP + diphosphate. The chain is Leucine--tRNA ligase from Prochlorococcus marinus (strain AS9601).